The chain runs to 494 residues: uncharacterized protein (494 aa).

The protein belongs to the TPP enzyme family.

This is an uncharacterized protein from Methanocaldococcus jannaschii (strain ATCC 43067 / DSM 2661 / JAL-1 / JCM 10045 / NBRC 100440) (Methanococcus jannaschii).